The chain runs to 238 residues: Ribosomal RNA small subunit methyltransferase G (238 aa).

S-adenosyl-L-methionine is bound by residues glycine 77, phenylalanine 82, 128–129 (AE), and arginine 147. Positions 216 to 238 (RKERSTPKKYPRKPGTPNKQPLS) are disordered.

The protein belongs to the methyltransferase superfamily. RNA methyltransferase RsmG family.

The protein resides in the cytoplasm. Its function is as follows. Specifically methylates the N7 position of guanine in position 535 of 16S rRNA. The polypeptide is Ribosomal RNA small subunit methyltransferase G (Halalkalibacterium halodurans (strain ATCC BAA-125 / DSM 18197 / FERM 7344 / JCM 9153 / C-125) (Bacillus halodurans)).